We begin with the raw amino-acid sequence, 545 residues long: MSAILSADDLNDFISPGVACIKPPAQNSDQKFNSLNENGEVEIQIDSEGNPLEISKIDGKQTNLSPAQISLADCLACSGCITSAEEVLVAQHSHEELIKALNEKVDNNSTKVFVASISHQSRASLATAYNLSIEEIDKLLINLFINQMGFKYIVGTSIGRKLSLINEAQNLIEKKESEFDGPVLSSICPGWVLYAEKTHPYVLPRMSTVKSPQQITGCLLKTLAAHELGVTRNDIYHLSIMPCFDKKLESARPEKYGEQNTSNDVDCVLTAKELVTLLEQHSDKFQLIPPQAHTITNSAIPVVDLYSKCAPRTWPLVQYSWSNDSGSASGGYGYNYLKMYQNHLIMKHPTKYQQEGFSIDYVKGRNTDLTEMRLMYGSEKLASSAIVNGFRNIQNLVRKLKPTVKPGSTTGKGNALVARRRARVAGGITKASSPAGSDESADASKCDYVEIMACPNGCINGGGQINPPEDVSEKDWLSASLEKYNSIPLLDLAAMENVDTVAEIMQWSCLFREEFGVSENRLLKTWFNEVEKPTDSASILLGARW.

[4Fe-4S] cluster-binding residues include Cys-20, Cys-74, Cys-77, Cys-80, Cys-188, Cys-243, Cys-454, and Cys-458.

Belongs to the NARF family.

Its function is as follows. Component of the cytosolic Fe/S protein assembly machinery. Required for maturation of extramitochondrial Fe/S proteins. May play a role in the transfer of pre-assembled Fe/S clusters to target apoproteins. The chain is Cytosolic Fe-S cluster assembly factor NAR1 (NAR1) from Scheffersomyces stipitis (strain ATCC 58785 / CBS 6054 / NBRC 10063 / NRRL Y-11545) (Yeast).